The sequence spans 374 residues: Putative glutamate--cysteine ligase 2 (374 aa).

This sequence belongs to the glutamate--cysteine ligase type 2 family. YbdK subfamily.

The catalysed reaction is L-cysteine + L-glutamate + ATP = gamma-L-glutamyl-L-cysteine + ADP + phosphate + H(+). Its function is as follows. ATP-dependent carboxylate-amine ligase which exhibits weak glutamate--cysteine ligase activity. The polypeptide is Putative glutamate--cysteine ligase 2 (Acidovorax ebreus (strain TPSY) (Diaphorobacter sp. (strain TPSY))).